We begin with the raw amino-acid sequence, 655 residues long: p-hydroxybenzoic acid efflux pump subunit AaeB (655 aa).

11 helical membrane-spanning segments follow: residues 13-33 (FAVK…HFQL), 38-58 (WAVL…GGEP), 69-89 (LRII…ITMI), 93-113 (LLMI…SSLV), 121-141 (WGLS…EPLL), 152-172 (EIVI…PRSV), 370-390 (LFWL…IAVV), 407-427 (FIYG…VIIP), 431-451 (QSML…GIEV), 459-479 (MGAL…TFHF), and 482-502 (FLDS…VILL).

Belongs to the aromatic acid exporter ArAE (TC 2.A.85) family.

Its subcellular location is the cell inner membrane. Functionally, forms an efflux pump with AaeA. Could function as a metabolic relief valve, allowing to eliminate certain compounds when they accumulate to high levels in the cell. The sequence is that of p-hydroxybenzoic acid efflux pump subunit AaeB from Citrobacter koseri (strain ATCC BAA-895 / CDC 4225-83 / SGSC4696).